Here is a 355-residue protein sequence, read N- to C-terminus: Vi polysaccharide export protein VexA/TviF (355 aa).

Residues 1 to 16 form the signal peptide; the sequence is MKKIIILLTTFFLLSG. Cys-17 is lipidated: N-palmitoyl cysteine. Residue Cys-17 is the site of S-diacylglycerol cysteine attachment.

The protein belongs to the BexD/CtrA/VexA family.

It is found in the cell outer membrane. Its function is as follows. May form an ATP-driven capsule polysaccharide export apparatus, in association with the VexB, VexC and VexD proteins. May function as a membrane anchor for the polysaccharide. Possible porin properties. In Salmonella typhi, this protein is Vi polysaccharide export protein VexA/TviF (vexA).